The sequence spans 529 residues: Bifunctional purine biosynthesis protein PurH (529 aa).

One can recognise an MGS-like domain in the interval 1–148 (MQQRRPVRRA…KNHKDVAIVV (148 aa)). Position 287 is an N6-acetyllysine (K287).

It belongs to the PurH family.

It catalyses the reaction (6R)-10-formyltetrahydrofolate + 5-amino-1-(5-phospho-beta-D-ribosyl)imidazole-4-carboxamide = 5-formamido-1-(5-phospho-D-ribosyl)imidazole-4-carboxamide + (6S)-5,6,7,8-tetrahydrofolate. The enzyme catalyses IMP + H2O = 5-formamido-1-(5-phospho-D-ribosyl)imidazole-4-carboxamide. It participates in purine metabolism; IMP biosynthesis via de novo pathway; 5-formamido-1-(5-phospho-D-ribosyl)imidazole-4-carboxamide from 5-amino-1-(5-phospho-D-ribosyl)imidazole-4-carboxamide (10-formyl THF route): step 1/1. It functions in the pathway purine metabolism; IMP biosynthesis via de novo pathway; IMP from 5-formamido-1-(5-phospho-D-ribosyl)imidazole-4-carboxamide: step 1/1. This is Bifunctional purine biosynthesis protein PurH from Escherichia coli O9:H4 (strain HS).